The following is a 121-amino-acid chain: Small ribosomal subunit protein uS12c (121 aa).

It belongs to the universal ribosomal protein uS12 family. As to quaternary structure, part of the 30S ribosomal subunit.

It is found in the plastid. Its subcellular location is the chloroplast. With S4 and S5 plays an important role in translational accuracy. Located at the interface of the 30S and 50S subunits. In Bigelowiella natans (Pedinomonas minutissima), this protein is Small ribosomal subunit protein uS12c (rps12).